The chain runs to 205 residues: GTP cyclohydrolase 1 (205 aa).

3 residues coordinate Zn(2+): Cys-93, His-96, and Cys-166.

Belongs to the GTP cyclohydrolase I family. As to quaternary structure, homomer.

It carries out the reaction GTP + H2O = 7,8-dihydroneopterin 3'-triphosphate + formate + H(+). Its pathway is cofactor biosynthesis; 7,8-dihydroneopterin triphosphate biosynthesis; 7,8-dihydroneopterin triphosphate from GTP: step 1/1. In Mycobacterium leprae (strain Br4923), this protein is GTP cyclohydrolase 1.